We begin with the raw amino-acid sequence, 311 residues long: Malate dehydrogenase (311 aa).

NAD(+) is bound by residues 7-13 and Asp34; that span reads GAAGGIG. Positions 81 and 87 each coordinate substrate. NAD(+) contacts are provided by residues Asn94 and 117–119; that span reads ITN. Asn119 and Arg153 together coordinate substrate. Catalysis depends on His177, which acts as the Proton acceptor. Met227 is an NAD(+) binding site.

It belongs to the LDH/MDH superfamily. MDH type 1 family. In terms of assembly, homodimer.

The enzyme catalyses (S)-malate + NAD(+) = oxaloacetate + NADH + H(+). In terms of biological role, catalyzes the reversible oxidation of malate to oxaloacetate. The sequence is that of Malate dehydrogenase from Aeromonas salmonicida (strain A449).